Consider the following 235-residue polypeptide: Deoxyribose-phosphate aldolase (235 aa).

Residue Asp-107 is the Proton donor/acceptor of the active site. The active-site Schiff-base intermediate with acetaldehyde is Lys-167. Lys-197 serves as the catalytic Proton donor/acceptor.

This sequence belongs to the DeoC/FbaB aldolase family. DeoC type 1 subfamily. In terms of assembly, homotetramer.

The protein resides in the cytoplasm. It carries out the reaction 2-deoxy-D-ribose 5-phosphate = D-glyceraldehyde 3-phosphate + acetaldehyde. Its pathway is carbohydrate degradation; 2-deoxy-D-ribose 1-phosphate degradation; D-glyceraldehyde 3-phosphate and acetaldehyde from 2-deoxy-alpha-D-ribose 1-phosphate: step 2/2. Catalyzes a reversible aldol reaction between acetaldehyde and D-glyceraldehyde 3-phosphate to generate 2-deoxy-D-ribose 5-phosphate. This Aeropyrum pernix (strain ATCC 700893 / DSM 11879 / JCM 9820 / NBRC 100138 / K1) protein is Deoxyribose-phosphate aldolase.